Consider the following 605-residue polypeptide: Probable serine/threonine-protein kinase DDB_G0286481 (605 aa).

The helical transmembrane segment at 5-25 threads the bilayer; that stretch reads YQIFFLLYLLCILYVISCGYI. Asn53 carries an N-linked (GlcNAc...) asparagine glycan. Composition is skewed to low complexity over residues 54-81 and 89-104; these read SSNN…NNNN and NCNN…NKSN. The disordered stretch occupies residues 54–170; that stretch reads SSNNNNNNNN…LGGSMGSGSQ (117 aa). Residues Asn92, Asn93, Asn97, and Asn101 are each glycosylated (N-linked (GlcNAc...) asparagine). The span at 105 to 123 shows a compositional bias: basic residues; sequence IKNKQHHHHSNFRNRRGKS. Asn127 carries an N-linked (GlcNAc...) asparagine glycan. Positions 144-155 are enriched in polar residues; the sequence is QSSSYDTSELHQ. An N-linked (GlcNAc...) asparagine glycan is attached at Asn280. The Protein kinase domain maps to 312 to 597; the sequence is YEVIQKIGRG…AKEAMKHPYF (286 aa). ATP is bound by residues 318-326 and Lys341; that span reads IGRGKYSEV. Asn390 is a glycosylation site (N-linked (GlcNAc...) asparagine). Residue Asp429 is the Proton acceptor of the active site. Asn601 carries an N-linked (GlcNAc...) asparagine glycan.

Belongs to the protein kinase superfamily. CMGC Ser/Thr protein kinase family.

It localises to the membrane. It catalyses the reaction L-seryl-[protein] + ATP = O-phospho-L-seryl-[protein] + ADP + H(+). The enzyme catalyses L-threonyl-[protein] + ATP = O-phospho-L-threonyl-[protein] + ADP + H(+). In Dictyostelium discoideum (Social amoeba), this protein is Probable serine/threonine-protein kinase DDB_G0286481.